The chain runs to 174 residues: ATP synthase subunit delta, sodium ion specific (174 aa).

Belongs to the ATPase delta chain family. F-type ATPases have 2 components, F(1) - the catalytic core - and F(0) - the membrane proton channel. F(1) has five subunits: alpha(3), beta(3), gamma(1), delta(1), epsilon(1). F(0) has three main subunits: a(1), b(2) and c(10-14). The alpha and beta chains form an alternating ring which encloses part of the gamma chain. F(1) is attached to F(0) by a central stalk formed by the gamma and epsilon chains, while a peripheral stalk is formed by the delta and b chains.

The protein localises to the cell inner membrane. Functionally, f(1)F(0) ATP synthase produces ATP from ADP in the presence of a proton or sodium gradient. F-type ATPases consist of two structural domains, F(1) containing the extramembraneous catalytic core and F(0) containing the membrane proton channel, linked together by a central stalk and a peripheral stalk. During catalysis, ATP synthesis in the catalytic domain of F(1) is coupled via a rotary mechanism of the central stalk subunits to proton translocation. Its function is as follows. This protein is part of the stalk that links CF(0) to CF(1). It either transmits conformational changes from CF(0) to CF(1) or is implicated in proton conduction. The chain is ATP synthase subunit delta, sodium ion specific from Ilyobacter tartaricus.